The following is a 995-amino-acid chain: Putative pentatricopeptide repeat-containing protein At5g09950 (995 aa).

22 PPR repeats span residues 35–65, 66–100, 101–137, 138–169, 170–204, 205–241, 242–276, 278–303, 307–342, 348–378, 379–413, 414–448, 449–483, 484–515, 516–550, 551–581, 583–617, 618–652, 653–683, 684–718, 720–750, and 756–786; these read DVYL…MPLR, NCVS…GIFS, NQYA…SYAV, DAVV…IEVK, NSVS…GSRP, TEYT…GLLT, DLFV…NAVT, NGLM…MNSM, SPES…VITT, MVGI…MTDK, DSVS…DILP, GSFT…GIDL, NVSV…DQVS, WNSI…GQKL, NRIT…NIAD, EATT…MAER, DNVT…GQRL, DSFM…CLES, DVVV…MPVR, NSYS…GQTP, DHVT…MSDS, and RIEH…MPMK. The interval 791–868 is type E motif; it reads IWRTVLGACC…EAGYSWVTMK (78 aa). Residues 869–899 are type E(+) motif; the sequence is DGVHMFVAGDKSHPDADVIYKKLKELNRKMR. Positions 900–995 are type DYW motif; the sequence is DAGYVPQTGF…DGACSCSDFW (96 aa).

It belongs to the PPR family. PCMP-H subfamily.

This is Putative pentatricopeptide repeat-containing protein At5g09950 (PCMP-H35) from Arabidopsis thaliana (Mouse-ear cress).